Here is a 69-residue protein sequence, read N- to C-terminus: Large ribosomal subunit protein bL31 (69 aa).

4 residues coordinate Zn(2+): C16, C18, C37, and C40.

It belongs to the bacterial ribosomal protein bL31 family. Type A subfamily. As to quaternary structure, part of the 50S ribosomal subunit. Zn(2+) is required as a cofactor.

In terms of biological role, binds the 23S rRNA. This Buchnera aphidicola subsp. Cinara cedri (strain Cc) protein is Large ribosomal subunit protein bL31.